A 449-amino-acid chain; its full sequence is Hyaluronidase-4 (449 aa).

An N-terminal signal peptide occupies residues 1 to 23; the sequence is MYHIWIKFLAAWIFLKRFNGVHV. 2 disulfides stabilise this stretch: cysteine 47-cysteine 340 and cysteine 211-cysteine 227. Residues asparagine 67, asparagine 103, and asparagine 111 are each glycosylated (N-linked (GlcNAc...) asparagine). Residue glutamate 135 is the Proton donor of the active site. The N-linked (GlcNAc...) asparagine glycan is linked to asparagine 153. Residue asparagine 357 is glycosylated (N-linked (GlcNAc...) asparagine). Disulfide bonds link cysteine 365–cysteine 376, cysteine 370–cysteine 427, and cysteine 429–cysteine 438. Asparagine 401 is a glycosylation site (N-linked (GlcNAc...) asparagine). An EGF-like domain is found at 427–438; it reads CQCYQGWKGLYC.

The protein belongs to the glycosyl hydrolase 56 family. In terms of assembly, monomer. Expressed by the venom gland.

The protein localises to the secreted. The enzyme catalyses Random hydrolysis of (1-&gt;4)-linkages between N-acetyl-beta-D-glucosamine and D-glucuronate residues in hyaluronate.. Snake venom endo-hyaluronidase that degrades hyaluronan to smaller oligosaccharide fragments. In venom, it is not toxic by itself, but increases the diffusion of other venom proteins by degrading the extracellular matrix. In addition, it displays antiedematogenic activity. The protein is Hyaluronidase-4 of Cerastes cerastes (Horned desert viper).